The chain runs to 160 residues: C-type lectin mosGCTL-1 (160 aa).

Positions 1-20 (MLTKGITLILLLVLVHSSHG) are cleaved as a signal peptide. Positions 23–140 (TPNRKFYIPS…YHWSWNDNTC (118 aa)) constitute a C-type lectin domain. Disulfide bonds link C44–C140 and C120–C140. N76 carries an N-linked (GlcNAc...) asparagine glycan.

As to quaternary structure, interacts with putative receptor-type tyrosine-protein phosphatase mosPTP-1; the interaction probably mediates the recruitment of West Nile virus particles in complex with C-type lectin mosGCTL-1 to the cell surface. (Microbial infection) Interacts with envelope protein E and virions of West Nile virus in a calcium-dependent manner. Female salivary gland (at protein level).

It is found in the secreted. In terms of biological role, putative lectin. Functionally, (Microbial infection) Facilitates West Nile virus infection in mosquitoes probably via capturing viral particles and presenting them to a ligand on the cell surface, thereby facilitating viral entry. In Aedes aegypti (Yellowfever mosquito), this protein is C-type lectin mosGCTL-1.